Consider the following 272-residue polypeptide: NADH-cytochrome b5 reductase 3 (272 aa).

In terms of domain architecture, FAD-binding FR-type spans 11–123 (DIKYPLRLID…RGPNGLLVYQ (113 aa)). Lys-13 is subject to N6-acetyllysine. Tyr-14 is subject to Phosphotyrosine. N6-acetyllysine is present on Lys-21. FAD-binding residues include Arg-63, Pro-64, Tyr-65, Val-80, Lys-82, and Tyr-84. Lys-91 is subject to N6-acetyllysine. The FAD site is built by Lys-97, Met-98, Ser-99, and Thr-156.

This sequence belongs to the flavoprotein pyridine nucleotide cytochrome reductase family. In terms of assembly, component of a complex composed of cytochrome b5, NADH-cytochrome b5 reductase (CYB5R3) and MTARC2. Interacts with MTLN; the interaction is required to maintain cellular lipid composition and leads to stimulation of mitochondrial respiratory complex I activity. It depends on FAD as a cofactor.

The protein resides in the endoplasmic reticulum membrane. The protein localises to the mitochondrion outer membrane. The enzyme catalyses 2 Fe(III)-[cytochrome b5] + NADH = 2 Fe(II)-[cytochrome b5] + NAD(+) + H(+). Catalyzes the reduction of two molecules of cytochrome b5 using NADH as the electron donor. The chain is NADH-cytochrome b5 reductase 3 (CYB5R3) from Sus scrofa (Pig).